The following is a 261-amino-acid chain: Thiazole synthase (261 aa).

The active-site Schiff-base intermediate with DXP is the Lys-95. Residues Gly-156, 182-183 (AG), and 204-205 (NT) contribute to the 1-deoxy-D-xylulose 5-phosphate site.

This sequence belongs to the ThiG family. In terms of assembly, homotetramer. Forms heterodimers with either ThiH or ThiS.

It is found in the cytoplasm. It catalyses the reaction [ThiS sulfur-carrier protein]-C-terminal-Gly-aminoethanethioate + 2-iminoacetate + 1-deoxy-D-xylulose 5-phosphate = [ThiS sulfur-carrier protein]-C-terminal Gly-Gly + 2-[(2R,5Z)-2-carboxy-4-methylthiazol-5(2H)-ylidene]ethyl phosphate + 2 H2O + H(+). It participates in cofactor biosynthesis; thiamine diphosphate biosynthesis. Catalyzes the rearrangement of 1-deoxy-D-xylulose 5-phosphate (DXP) to produce the thiazole phosphate moiety of thiamine. Sulfur is provided by the thiocarboxylate moiety of the carrier protein ThiS. In vitro, sulfur can be provided by H(2)S. The polypeptide is Thiazole synthase (Pectobacterium atrosepticum (strain SCRI 1043 / ATCC BAA-672) (Erwinia carotovora subsp. atroseptica)).